The primary structure comprises 505 residues: ATP synthase subunit alpha (505 aa).

G169 to T176 is a binding site for ATP.

The protein belongs to the ATPase alpha/beta chains family. As to quaternary structure, F-type ATPases have 2 components, CF(1) - the catalytic core - and CF(0) - the membrane proton channel. CF(1) has five subunits: alpha(3), beta(3), gamma(1), delta(1), epsilon(1). CF(0) has three main subunits: a(1), b(2) and c(9-12). The alpha and beta chains form an alternating ring which encloses part of the gamma chain. CF(1) is attached to CF(0) by a central stalk formed by the gamma and epsilon chains, while a peripheral stalk is formed by the delta and b chains.

Its subcellular location is the cell membrane. The catalysed reaction is ATP + H2O + 4 H(+)(in) = ADP + phosphate + 5 H(+)(out). Functionally, produces ATP from ADP in the presence of a proton gradient across the membrane. The alpha chain is a regulatory subunit. In Clostridium acetobutylicum (strain ATCC 824 / DSM 792 / JCM 1419 / IAM 19013 / LMG 5710 / NBRC 13948 / NRRL B-527 / VKM B-1787 / 2291 / W), this protein is ATP synthase subunit alpha.